A 720-amino-acid chain; its full sequence is Fatty acid CoA ligase Acsl3 (720 aa).

Residues 21-41 (ILLYFIHFLISLYTILTYIPF) traverse the membrane as a helical; Signal-anchor for type III membrane protein segment. Residues 42-720 (YFFSESRQEK…ADIERMYGRK (679 aa)) lie on the Cytoplasmic side of the membrane. The residue at position 683 (Ser683) is a Phosphoserine.

This sequence belongs to the ATP-dependent AMP-binding enzyme family. It depends on Mg(2+) as a cofactor.

It is found in the mitochondrion outer membrane. The protein resides in the peroxisome membrane. Its subcellular location is the microsome membrane. The protein localises to the endoplasmic reticulum membrane. The catalysed reaction is a long-chain fatty acid + ATP + CoA = a long-chain fatty acyl-CoA + AMP + diphosphate. It carries out the reaction (5Z,8Z,11Z,14Z)-eicosatetraenoate + ATP + CoA = (5Z,8Z,11Z,14Z)-eicosatetraenoyl-CoA + AMP + diphosphate. The enzyme catalyses (E)-hexadec-2-enoate + ATP + CoA = (2E)-hexadecenoyl-CoA + AMP + diphosphate. It catalyses the reaction 15-hydroxy-(5Z,8Z,11Z,13E)-eicosatetraenoate + ATP + CoA = 15-hydroxy-(5Z,8Z,11Z,13E)-eicosatetraenoyl-CoA + AMP + diphosphate. The catalysed reaction is 12-hydroxy-(5Z,8Z,10E,14Z)-eicosatetraenoate + ATP + CoA = 12-hydroxy-(5Z,8Z,10E,14Z)-eicosatetraenoyl-CoA + AMP + diphosphate. It carries out the reaction 5-hydroxy-(6E,8Z,11Z,14Z)-eicosatetraenoate + ATP + CoA = 5-hydroxy-(6E,8Z,11Z,14Z)-eicosatetraenoyl-CoA + AMP + diphosphate. The enzyme catalyses 14,15-epoxy-(5Z,8Z,11Z)-eicosatrienoate + ATP + CoA = 14,15-epoxy-(5Z,8Z,11Z)-eicosatrienoyl-CoA + AMP + diphosphate. It catalyses the reaction 11,12-epoxy-(5Z,8Z,14Z)-eicosatrienoate + ATP + CoA = 11,12-epoxy-(5Z,8Z,14Z)-eicosatrienoyl-CoA + AMP + diphosphate. The catalysed reaction is a medium-chain fatty acid + ATP + CoA = a medium-chain fatty acyl-CoA + AMP + diphosphate. It carries out the reaction hexadecanoate + ATP + CoA = hexadecanoyl-CoA + AMP + diphosphate. The enzyme catalyses tetradecanoate + ATP + CoA = tetradecanoyl-CoA + AMP + diphosphate. It catalyses the reaction dodecanoate + ATP + CoA = dodecanoyl-CoA + AMP + diphosphate. The catalysed reaction is octadecanoate + ATP + CoA = octadecanoyl-CoA + AMP + diphosphate. It carries out the reaction eicosanoate + ATP + CoA = eicosanoyl-CoA + AMP + diphosphate. The enzyme catalyses (9Z)-octadecenoate + ATP + CoA = (9Z)-octadecenoyl-CoA + AMP + diphosphate. It catalyses the reaction (9Z)-hexadecenoate + ATP + CoA = (9Z)-hexadecenoyl-CoA + AMP + diphosphate. The catalysed reaction is (9Z,12Z)-octadecadienoate + ATP + CoA = (9Z,12Z)-octadecadienoyl-CoA + AMP + diphosphate. It carries out the reaction (9Z,12Z,15Z)-octadecatrienoate + ATP + CoA = (9Z,12Z,15Z)-octadecatrienoyl-CoA + AMP + diphosphate. The enzyme catalyses (4Z,7Z,10Z,13Z,16Z,19Z)-docosahexaenoate + ATP + CoA = (4Z,7Z,10Z,13Z,16Z,19Z)-docosahexaenoyl-CoA + AMP + diphosphate. It catalyses the reaction (5Z,8Z,11Z,14Z,17Z)-eicosapentaenoate + ATP + CoA = (5Z,8Z,11Z,14Z,17Z)-eicosapentaenoyl-CoA + AMP + diphosphate. The catalysed reaction is a fatty acid + ATP + CoA = a fatty acyl-CoA + AMP + diphosphate. Acyl-CoA synthetases (ACSL) activates long-chain fatty acids for both synthesis of cellular lipids, and degradation via beta-oxidation. Required for the incorporation of fatty acids into phosphatidylcholine, the major phospholipid located on the surface of VLDL (very low density lipoproteins). Has mainly an anabolic role in energy metabolism. Mediates hepatic lipogenesis. Preferentially uses myristate, laurate, arachidonate and eicosapentaenoate as substrates. Both isoforms exhibit the same level of activity. This chain is Fatty acid CoA ligase Acsl3, found in Homo sapiens (Human).